A 558-amino-acid polypeptide reads, in one-letter code: Scarecrow-like protein 6 (558 aa).

Residues 19–90 (FSSSFPQPPS…GGDATTDEQC (72 aa)) are disordered. Low complexity predominate over residues 54-75 (SVLDSLISPTSSSTVSSSHGGN). Residues 196–554 (KRLNPGPVGI…TELVGVSAWR (359 aa)) form the GRAS domain. The leucine repeat I (LRI) stretch occupies residues 203 to 257 (VGITEQLVKAAEVIESDTCLAQGILARLNQQLSSPVGKPLERAAFYFKEALNNLL). The VHIID stretch occupies residues 276–340 (YKSFSEISPV…DNAAPLSLKI (65 aa)). Residues 307–311 (LHIID) carry the VHIID motif. Residues 356–388 (FTQDNLKHFASEINISLDIQVLSLDLLGSISWP) form a leucine repeat II (LRII) region. Residues 396 to 479 (VAVNISAASF…RFLIQPEIEK (84 aa)) are PFYRE. An SAW region spans residues 482-554 (LDRSRPIERP…TELVGVSAWR (73 aa)).

Belongs to the GRAS family. As to quaternary structure, interacts with Meloidogyne incognita 16D10. Expressed in seedlings, roots, leaves, flowers and siliques.

It is found in the nucleus. In terms of biological role, probable transcription factor involved in plant development. The chain is Scarecrow-like protein 6 (SCL6) from Arabidopsis thaliana (Mouse-ear cress).